The chain runs to 357 residues: tRNA-specific 2-thiouridylase MnmA (357 aa).

Residues 6–13 and Leu-32 contribute to the ATP site; that span reads AMSGGVDS. The active-site Nucleophile is Cys-101. A disulfide bridge links Cys-101 with Cys-193. Gly-125 is a binding site for ATP. Residues 143 to 145 form an interaction with tRNA region; that stretch reads KDQ. The active-site Cysteine persulfide intermediate is the Cys-193.

The protein belongs to the MnmA/TRMU family.

It is found in the cytoplasm. It carries out the reaction S-sulfanyl-L-cysteinyl-[protein] + uridine(34) in tRNA + AH2 + ATP = 2-thiouridine(34) in tRNA + L-cysteinyl-[protein] + A + AMP + diphosphate + H(+). Its function is as follows. Catalyzes the 2-thiolation of uridine at the wobble position (U34) of tRNA, leading to the formation of s(2)U34. The polypeptide is tRNA-specific 2-thiouridylase MnmA (Mycolicibacterium gilvum (strain PYR-GCK) (Mycobacterium gilvum (strain PYR-GCK))).